The following is a 126-amino-acid chain: Fluoride-specific ion channel FluC (126 aa).

Transmembrane regions (helical) follow at residues 5-25 (ILCV…FYFG), 34-54 (YIFI…GFVL), 71-91 (VTGL…NAVF), and 100-120 (FFLN…LGIY). G76 and T79 together coordinate Na(+).

It belongs to the fluoride channel Fluc/FEX (TC 1.A.43) family.

It is found in the cell inner membrane. It carries out the reaction fluoride(in) = fluoride(out). With respect to regulation, na(+) is not transported, but it plays an essential structural role and its presence is essential for fluoride channel function. In terms of biological role, fluoride-specific ion channel. Important for reducing fluoride concentration in the cell, thus reducing its toxicity. This Campylobacter hominis (strain ATCC BAA-381 / DSM 21671 / CCUG 45161 / LMG 19568 / NCTC 13146 / CH001A) protein is Fluoride-specific ion channel FluC.